A 358-amino-acid polypeptide reads, in one-letter code: 3-dehydroquinate synthase (358 aa).

Residues 70 to 75 (DGEQYK), 104 to 108 (GVVGD), 128 to 129 (TT), Lys-141, Lys-150, and 168 to 171 (CLNT) each bind NAD(+). Residues Glu-183, His-246, and His-263 each contribute to the Zn(2+) site.

The protein belongs to the sugar phosphate cyclases superfamily. Dehydroquinate synthase family. Co(2+) serves as cofactor. Zn(2+) is required as a cofactor. It depends on NAD(+) as a cofactor.

Its subcellular location is the cytoplasm. It carries out the reaction 7-phospho-2-dehydro-3-deoxy-D-arabino-heptonate = 3-dehydroquinate + phosphate. It participates in metabolic intermediate biosynthesis; chorismate biosynthesis; chorismate from D-erythrose 4-phosphate and phosphoenolpyruvate: step 2/7. Catalyzes the conversion of 3-deoxy-D-arabino-heptulosonate 7-phosphate (DAHP) to dehydroquinate (DHQ). This chain is 3-dehydroquinate synthase, found in Shewanella sediminis (strain HAW-EB3).